A 332-amino-acid polypeptide reads, in one-letter code: UDP-3-O-acylglucosamine N-acyltransferase (332 aa).

His231 acts as the Proton acceptor in catalysis.

Belongs to the transferase hexapeptide repeat family. LpxD subfamily. Homotrimer.

It catalyses the reaction a UDP-3-O-[(3R)-3-hydroxyacyl]-alpha-D-glucosamine + a (3R)-hydroxyacyl-[ACP] = a UDP-2-N,3-O-bis[(3R)-3-hydroxyacyl]-alpha-D-glucosamine + holo-[ACP] + H(+). It functions in the pathway bacterial outer membrane biogenesis; LPS lipid A biosynthesis. Functionally, catalyzes the N-acylation of UDP-3-O-acylglucosamine using 3-hydroxyacyl-ACP as the acyl donor. Is involved in the biosynthesis of lipid A, a phosphorylated glycolipid that anchors the lipopolysaccharide to the outer membrane of the cell. This chain is UDP-3-O-acylglucosamine N-acyltransferase, found in Vesicomyosocius okutanii subsp. Calyptogena okutanii (strain HA).